The chain runs to 470 residues: Cysteine--tRNA ligase (470 aa).

Zn(2+) is bound at residue C28. Residues 30–40 (PTVYNYIHIGN) carry the 'HIGH' region motif. C212, H237, and E241 together coordinate Zn(2+). Residues 271–275 (KMSKS) carry the 'KMSKS' region motif. K274 is an ATP binding site.

Belongs to the class-I aminoacyl-tRNA synthetase family. As to quaternary structure, monomer. It depends on Zn(2+) as a cofactor.

It localises to the cytoplasm. It catalyses the reaction tRNA(Cys) + L-cysteine + ATP = L-cysteinyl-tRNA(Cys) + AMP + diphosphate. In Lactiplantibacillus plantarum (strain ATCC BAA-793 / NCIMB 8826 / WCFS1) (Lactobacillus plantarum), this protein is Cysteine--tRNA ligase.